Reading from the N-terminus, the 81-residue chain is Large ribosomal subunit protein bL31B (81 aa).

It belongs to the bacterial ribosomal protein bL31 family. Type B subfamily. In terms of assembly, part of the 50S ribosomal subunit.

The chain is Large ribosomal subunit protein bL31B from Borreliella burgdorferi (strain ATCC 35210 / DSM 4680 / CIP 102532 / B31) (Borrelia burgdorferi).